The following is a 424-amino-acid chain: N-succinylarginine dihydrolase (424 aa).

Residues 19 to 28 (AGLSRGNVAS), asparagine 110, and 137 to 138 (HR) contribute to the substrate site. The active site involves glutamate 174. Arginine 206 contacts substrate. Histidine 242 is a catalytic residue. 2 residues coordinate substrate: aspartate 244 and asparagine 351. Cysteine 357 functions as the Nucleophile in the catalytic mechanism.

This sequence belongs to the succinylarginine dihydrolase family. As to quaternary structure, homodimer.

It carries out the reaction N(2)-succinyl-L-arginine + 2 H2O + 2 H(+) = N(2)-succinyl-L-ornithine + 2 NH4(+) + CO2. The protein operates within amino-acid degradation; L-arginine degradation via AST pathway; L-glutamate and succinate from L-arginine: step 2/5. In terms of biological role, catalyzes the hydrolysis of N(2)-succinylarginine into N(2)-succinylornithine, ammonia and CO(2). The sequence is that of N-succinylarginine dihydrolase from Zymomonas mobilis subsp. mobilis (strain ATCC 31821 / ZM4 / CP4).